The following is a 404-amino-acid chain: Putative replication protein C (404 aa).

The segment at 249–287 (PDQIERHKQNSHPESTNEFEPSSREEQGERPSPAIEPQR) is disordered.

To A.rhizogenes possible replication protein C (RepC).

In Sinorhizobium fredii (strain NBRC 101917 / NGR234), this protein is Putative replication protein C.